Here is a 504-residue protein sequence, read N- to C-terminus: Cytochrome P450 6a9 (504 aa).

Cysteine 449 is a binding site for heme.

The protein belongs to the cytochrome P450 family. Requires heme as cofactor.

Its subcellular location is the endoplasmic reticulum membrane. It is found in the microsome membrane. In terms of biological role, involved in the metabolism of insect hormones and in the breakdown of synthetic insecticides. The sequence is that of Cytochrome P450 6a9 (Cyp6a9) from Drosophila melanogaster (Fruit fly).